We begin with the raw amino-acid sequence, 198 residues long: GTP cyclohydrolase 1 (198 aa).

Positions 87, 90, and 158 each coordinate Zn(2+).

The protein belongs to the GTP cyclohydrolase I family. In terms of assembly, homomer.

It catalyses the reaction GTP + H2O = 7,8-dihydroneopterin 3'-triphosphate + formate + H(+). It functions in the pathway cofactor biosynthesis; 7,8-dihydroneopterin triphosphate biosynthesis; 7,8-dihydroneopterin triphosphate from GTP: step 1/1. This chain is GTP cyclohydrolase 1, found in Janthinobacterium sp. (strain Marseille) (Minibacterium massiliensis).